The sequence spans 456 residues: MKRVYFIGIGGIGMSAIARYFHAKGFNVCGYDLTPSPITDQLIKEGIEVHFSDDLNMIPKAFFSPTDSLIVYTPAVPADHSELTYFRSNGYRVVKRAEVLGEITLMERALCVAGTHGKTTTSTLLAHLLKQSHVDCNAFLGGISNNYQSNLLLSDKSDLVVVEADEFDRSFHHLKPFMAIITSADPDHMDIYGTAENYRDSFEHFTSLIQSGGALVLKYGAPVNPRLGSDVSLFTYSSDDQQADYFASDIMIRDGRLFFTWHYPGGQLEGVELGVPVRINVENAVAAMAIAHLNGVTVEELRSGIASFKGSHRRFEKVLDTERVVLIDDYAHHPVELDAAIHSVREIYSGKHIMGIFQPHLYSRTADFYQDFARSLSMLDEVVLLDIYPARELPLPGVTSRLILDLIENPNKTLVSKNDLLDYLHGNEIPDVVLILGAGDIDRLVIPVKQYLQTLC.

ATP is bound at residue 114-120 (GTHGKTT).

This sequence belongs to the MurCDEF family.

Its subcellular location is the cytoplasm. The enzyme catalyses UDP-N-acetyl-alpha-D-muramate + L-alanine + ATP = UDP-N-acetyl-alpha-D-muramoyl-L-alanine + ADP + phosphate + H(+). The protein operates within cell wall biogenesis; peptidoglycan biosynthesis. Its function is as follows. Cell wall formation. This Porphyromonas gingivalis (strain ATCC BAA-308 / W83) protein is UDP-N-acetylmuramate--L-alanine ligase (murC).